A 72-amino-acid polypeptide reads, in one-letter code: UPF0352 protein CGSHiGG_07710 (72 aa).

It belongs to the UPF0352 family.

The polypeptide is UPF0352 protein CGSHiGG_07710 (Haemophilus influenzae (strain PittGG)).